The chain runs to 97 residues: Protein RnfH (97 aa).

This sequence belongs to the UPF0125 (RnfH) family.

In Proteus mirabilis (strain HI4320), this protein is Protein RnfH.